The primary structure comprises 94 residues: Large ribosomal subunit protein bL25 (94 aa).

It belongs to the bacterial ribosomal protein bL25 family. In terms of assembly, part of the 50S ribosomal subunit; part of the 5S rRNA/L5/L18/L25 subcomplex. Contacts the 5S rRNA. Binds to the 5S rRNA independently of L5 and L18.

In terms of biological role, this is one of the proteins that binds to the 5S RNA in the ribosome where it forms part of the central protuberance. The sequence is that of Large ribosomal subunit protein bL25 from Pectobacterium carotovorum subsp. carotovorum (strain PC1).